We begin with the raw amino-acid sequence, 258 residues long: Allene oxide cyclase 3, chloroplastic (258 aa).

The transit peptide at 1-56 (MASSSAAMSLESISMTTLNNLSRNHQSHRSSLLGFSRSFQNLGISSNGPDFSSRSR) directs the protein to the chloroplast.

The protein belongs to the allene oxide cyclase family. In terms of tissue distribution, highly expressed in fully developed leaves.

The protein resides in the plastid. It is found in the chloroplast. The enzyme catalyses (9Z,13S,15Z)-12,13-epoxyoctadeca-9,11,15-trienoate = (9S,13S,15Z)-12-oxophyto-10,15-dienoate. Functionally, involved in the production of 12-oxo-phytodienoic acid (OPDA), a precursor of jasmonic acid. The polypeptide is Allene oxide cyclase 3, chloroplastic (AOC3) (Arabidopsis thaliana (Mouse-ear cress)).